A 208-amino-acid polypeptide reads, in one-letter code: MKIVEVKHPLVKHKLGLMRVADITTKDFRELATEVGSLLTYEATSDLETEKVIIDGWCGAVEIDRIKGKKVTVVPILRAGLGMMDGVLEHVPSARISVVGMYRDEETLEPVPYFQKLASDLDERLAIVVDPMLATGGSMIATINLLKAKGCQHIKVLVLVAAPEGIKALEAVHPDVELYTASIDSHLNEHGYIIPGLGDAGDKIFGTK.

5-phospho-alpha-D-ribose 1-diphosphate-binding positions include Arg-78, Arg-103, and 130-138 (DPMLATGGS). Residues Ile-193 and 198–200 (GDA) contribute to the uracil site. Asp-199 serves as a coordination point for 5-phospho-alpha-D-ribose 1-diphosphate.

The protein belongs to the UPRTase family. The cofactor is Mg(2+).

It catalyses the reaction UMP + diphosphate = 5-phospho-alpha-D-ribose 1-diphosphate + uracil. It functions in the pathway pyrimidine metabolism; UMP biosynthesis via salvage pathway; UMP from uracil: step 1/1. Its activity is regulated as follows. Allosterically activated by GTP. Functionally, catalyzes the conversion of uracil and 5-phospho-alpha-D-ribose 1-diphosphate (PRPP) to UMP and diphosphate. The chain is Uracil phosphoribosyltransferase from Histophilus somni (strain 129Pt) (Haemophilus somnus).